The sequence spans 30 residues: Elongation factor 1-delta (30 aa).

It belongs to the EF-1-beta/EF-1-delta family. As to quaternary structure, EF-1 is composed of 4 subunits: alpha, beta (1B-alpha=beta'), delta (1B-beta), and gamma (1B-gamma).

Functionally, EF-1-beta and EF-1-delta stimulate the exchange of GDP bound to EF-1-alpha to GTP. This is Elongation factor 1-delta from Populus euphratica (Euphrates poplar).